Consider the following 55-residue polypeptide: Preprotein translocase subunit SecG (55 aa).

Residues 1–29 (MAKKSGSGLQSSAGLMRYYEADKNAVQVQ) lie on the Cytoplasmic side of the membrane. A helical transmembrane segment spans residues 30–51 (PKVVLIVGAIVGIAVLFLSAVN). The Extracellular portion of the chain corresponds to 52-55 (GFWP).

Belongs to the SEC61-beta family. In terms of assembly, component of the protein translocase complex. Heterotrimer consisting of alpha (SecY), beta (SecG) and gamma (SecE) subunits. Can form oligomers of the heterotrimer.

It localises to the cell membrane. Its function is as follows. Involved in protein export. The function of the beta subunit is unknown, but it may be involved in stabilization of the trimeric complex. The chain is Preprotein translocase subunit SecG from Methanosarcina barkeri (strain Fusaro / DSM 804).